Consider the following 301-residue polypeptide: NADH-cytochrome b5 reductase 3 (301 aa).

A lipid anchor (N-myristoyl glycine) is attached at G2. Residues 40-152 enclose the FAD-binding FR-type domain; the sequence is DIKYPLRLID…RGPNGLLVYQ (113 aa). K42 carries the N6-acetyllysine modification. Residue Y43 is modified to Phosphotyrosine. K50 is subject to N6-acetyllysine. Residues R92, P93, Y94, V109, K111, and F114 each coordinate FAD. K120 carries the post-translational modification N6-acetyllysine. The FAD site is built by K126, M127, S128, and T185.

This sequence belongs to the flavoprotein pyridine nucleotide cytochrome reductase family. In terms of assembly, component of a complex composed of cytochrome b5, NADH-cytochrome b5 reductase (CYB5R3) and MTARC2. Interacts with MTLN; the interaction is required to maintain cellular lipid composition and leads to stimulation of mitochondrial respiratory complex I activity. Requires FAD as cofactor.

It localises to the endoplasmic reticulum membrane. It is found in the mitochondrion outer membrane. The catalysed reaction is 2 Fe(III)-[cytochrome b5] + NADH = 2 Fe(II)-[cytochrome b5] + NAD(+) + H(+). Functionally, catalyzes the reduction of two molecules of cytochrome b5 using NADH as the electron donor. This is NADH-cytochrome b5 reductase 3 from Mus musculus (Mouse).